Reading from the N-terminus, the 427-residue chain is tRNA(Ile)-lysidine synthase (427 aa).

25-30 lines the ATP pocket; sequence SGGLDS.

Belongs to the tRNA(Ile)-lysidine synthase family.

Its subcellular location is the cytoplasm. The enzyme catalyses cytidine(34) in tRNA(Ile2) + L-lysine + ATP = lysidine(34) in tRNA(Ile2) + AMP + diphosphate + H(+). Ligates lysine onto the cytidine present at position 34 of the AUA codon-specific tRNA(Ile) that contains the anticodon CAU, in an ATP-dependent manner. Cytidine is converted to lysidine, thus changing the amino acid specificity of the tRNA from methionine to isoleucine. This is tRNA(Ile)-lysidine synthase from Histophilus somni (strain 2336) (Haemophilus somnus).